The primary structure comprises 770 residues: Transcription activator AMTR1 (770 aa).

The segment at residues 7–34 (CLTCRQRKLKCDEKKPVCRQCAKASREC) is a DNA-binding region (zn(2)-C6 fungal-type).

Its subcellular location is the nucleus. Functionally, transcription factor that regulates the expression of the gene clusters that mediate the biosynthesis of AM-toxins, host-selective toxins (HSTs) causing Alternaria blotch on apple, a worldwide distributed disease. AM-toxins have two target sites for affecting susceptible apple cells; they cause invagination of the plasma membrane and electrolyte loss and chloroplast disorganization. This chain is Transcription activator AMTR1, found in Alternaria alternata (Alternaria rot fungus).